Here is a 291-residue protein sequence, read N- to C-terminus: Verruculogen synthase (291 aa).

Residue tyrosine 68 is part of the active site.

This sequence belongs to the PhyH family. As to quaternary structure, homodimer. Fe cation serves as cofactor.

The catalysed reaction is fumitremorgin B + 2-oxoglutarate + AH2 + 2 O2 = verruculogen + succinate + A + CO2 + H2O. It participates in mycotoxin biosynthesis. Functionally, verruculogen synthase; part of the gene cluster that mediates the biosynthesis of fumitremorgins, indole alkaloids that carry not only intriguing chemical structures, but also interesting biological and pharmacological activities. The biosynthesis of fumitremorgin-type alkaloids begins by condensation of the two amino acids L-tryptophan and L-proline to brevianamide F, catalyzed by the non-ribosomal peptide synthetase ftmA. Brevianamide F is then prenylated by the prenyltransferase ftmPT1/ftmB in the presence of dimethylallyl diphosphate, resulting in the formation of tryprostatin B. The three cytochrome P450 monooxygenases, ftmP450-1/ftmC, ftmP450-2/ftmE and ftmP450-3/FtmG, are responsible for the conversion of tryprostatin B to 6-hydroxytryprostatin B, tryprostatin A to fumitremorgin C and fumitremorgin C to 12,13-dihydroxyfumitremorgin C, respectively. The putative methyltransferase ftmMT/ftmD is expected for the conversion of 6-hydroxytryprostatin B to tryprostatin A. FtmPT2/FtmH catalyzes the prenylation of 12,13-dihydroxyfumitre-morgin C in the presence of dimethylallyl diphosphate, resulting in the formation of fumitremorgin B. Fumitremorgin B is further converted to verruculogen by ftmOx1/ftmF via the insertion of an endoperoxide bond between the two prenyl moieties. In some fungal species, verruculogen is further converted to fumitremorgin A, but the enzymes involved in this step have not been identified yet. This Aspergillus fumigatus (strain ATCC MYA-4609 / CBS 101355 / FGSC A1100 / Af293) (Neosartorya fumigata) protein is Verruculogen synthase.